Consider the following 430-residue polypeptide: Gamma-glutamyl phosphate reductase (430 aa).

This sequence belongs to the gamma-glutamyl phosphate reductase family.

It is found in the cytoplasm. The catalysed reaction is L-glutamate 5-semialdehyde + phosphate + NADP(+) = L-glutamyl 5-phosphate + NADPH + H(+). It functions in the pathway amino-acid biosynthesis; L-proline biosynthesis; L-glutamate 5-semialdehyde from L-glutamate: step 2/2. Catalyzes the NADPH-dependent reduction of L-glutamate 5-phosphate into L-glutamate 5-semialdehyde and phosphate. The product spontaneously undergoes cyclization to form 1-pyrroline-5-carboxylate. The protein is Gamma-glutamyl phosphate reductase of Corynebacterium diphtheriae (strain ATCC 700971 / NCTC 13129 / Biotype gravis).